A 322-amino-acid chain; its full sequence is 3-hydroxyacyl-CoA dehydrogenase FVEG_12628 (322 aa).

A helical membrane pass occupies residues I5 to L25. Residue E151 is the For hydroxyacyl-coenzyme A dehydrogenase activity of the active site.

Belongs to the 3-hydroxyacyl-CoA dehydrogenase family.

It is found in the membrane. Its function is as follows. 3-hydroxyacyl-CoA dehydrogenase; part of the Fusarium detoxification of benzoxazolinone cluster 2 (FDB2) involved in the degradation of benzoxazolinones produced by the host plant. Maize, wheat, and rye produce the 2 benzoxazinone phytoanticipins 2,4-dihy-droxy-7-methoxy-1,4-benzoxazin-3-one (DIMBOA) and 2,4-dihydroxy-1,4-benzoxazin-3-one (DIBOA) that, due to their inherent instability once released, spontaneously degrade to the more stable corresponding benzoxazolinones, 6-methoxy-2-benzoxazolinone (MBOA) and 2-benzoxazolinone (BOA), respectively. The first step in the detoxification of benzoxazolinones involves the hydrolysis of the cyclic ester bond of benzoxazolinones by the FDB1 cluster gamma-lactamase MBL1 to aminophenols. MBL1 is able to convert BOA into 2-aminophenol (2-AP), as well as MBOA into 5-methoxy-2-aminophenol (2-AMP). The FDB2 cluster N-malonyltransferase FDB2/NAT1 then metabolizes aminophenols via N-malonylation to non-toxic malonamic acids. FDB2/NAT1 converts 2-AP into N-(2-hydroxyphenyl) malonamic acid (HPMA) and 2-AMP into N-(2-hydroxy-4-methoxyphenyl) malonamic acid (HMPMA). The duplicated dienlactone hydrolases DLH1 and DLH2 may provide redundant function for hydrolyzing the lactone moiety in the BOA molecule. The roles of the amidases an other enzymes encoded by the 2 FDB clusters have not been identified so far. The sequence is that of 3-hydroxyacyl-CoA dehydrogenase FVEG_12628 from Gibberella moniliformis (strain M3125 / FGSC 7600) (Maize ear and stalk rot fungus).